The following is a 641-amino-acid chain: Pumilio homolog 24 (641 aa).

The segment at 1–82 (MSSKGLKPQK…LTEARKKKRK (82 aa)) is disordered. Residues 9–404 (QKSTKRKDTD…RPLLQLLHPN (396 aa)) form the PUM-HD domain. Basic and acidic residues-rich tracts occupy residues 14–27 (RKDT…DSLK) and 67–76 (RVQAKELTEA). 5 Pumilio repeats span residues 118-153 (KMKG…VLFT), 154-189 (ELQP…ACIS), 190-225 (SLRG…ELLA), 303-340 (QLLT…KIIK), and 341-378 (AMKE…IIVR). The interval 427–468 (MDKSETSSKTKDTDGNEIGEETKDEQEDTVAEHSDHEENVTA) is disordered. Residues 428–440 (DKSETSSKTKDTD) are compositionally biased toward basic and acidic residues. Residues 441-455 (GNEIGEETKDEQEDT) show a composition bias toward acidic residues. The segment covering 456-468 (VAEHSDHEENVTA) has biased composition (basic and acidic residues).

The protein localises to the nucleus. It localises to the nucleolus. In terms of biological role, sequence-specific RNA-binding protein that regulates translation and mRNA stability by binding the 3'-UTR of target mRNAs. This chain is Pumilio homolog 24 (APUM24), found in Arabidopsis thaliana (Mouse-ear cress).